Here is a 613-residue protein sequence, read N- to C-terminus: UBX domain-containing protein 3 (613 aa).

Disordered stretches follow at residues 67 to 223 (PAAA…PINP) and 453 to 472 (MNEQ…RNQQ). Low complexity predominate over residues 68-82 (AAASGRNAGASSSSR). The span at 137–149 (THHRGAAIPRQKR) shows a compositional bias: basic residues. Residues 158 to 169 (SSSGSSSASFSS) are compositionally biased toward low complexity. Positions 452–517 (RMNEQSERRE…EEEECVRRQT (66 aa)) form a coiled coil. The 80-residue stretch at 531-610 (PLAEIINVKF…KWPAREQIFV (80 aa)) folds into the UBX domain. Residues 582–584 (FPK) carry the Interaction with cdc-48 motif.

Forms a complex composed of ubxn-3, cdc-48.1, ufd-1 and npl-4.1. Forms a complex composed of ubxn-3, cdc-48.1 and/or cdc-48.2 and substrate cdt-1. Interacts (via FPK motif) with cdc-48.1 (via N-terminus) and cdc-48.2 (via N-terminus). Interacts (via N-terminus) with cdt-1 and ubiquitinated protein substrates; the interaction is cdc-48-independent. May interact with npl-4.1. Expressed in the germline (at protein level). Expressed in spermatocytes but not in mature sperm (at protein level). Expressed in the spermatheca and nerve cells.

It localises to the nucleus. Its subcellular location is the cytoplasm. It is found in the perinuclear region. The protein localises to the chromosome. Its function is as follows. Ubiquitin-binding protein which acts as an adapter for ATPase cdc-48.1 and/or cdc-48.2, conferring substrate specificity. Together with ubxn-1 and ubxn-2, plays a role in hermaphrodite spermatogenesis probably by promoting the degradation of sex determination terminal factor tra-1. During mitosis, ensures the degradation of DNA licensing factor cdt-1 and the disassembly of the DNA replication CMG helicase complex by promoting the dissociation from chromatin of several of its components including cdc-45 and sld-5. The chain is UBX domain-containing protein 3 from Caenorhabditis elegans.